A 346-amino-acid chain; its full sequence is Dynein regulatory complex protein 9 (346 aa).

A compositionally biased stretch (basic and acidic residues) spans 299 to 308 (MEKEQREKNA). The segment at 299–346 (MEKEQREKNAATKIQAWWRGTLVRKGPRSKKADKSKKKDGKKGKKKRK) is disordered. Positions 305–334 (EKNAATKIQAWWRGTLVRKGPRSKKADKSK) constitute an IQ domain. Positions 323 to 346 (KGPRSKKADKSKKKDGKKGKKKRK) are enriched in basic residues.

This sequence belongs to the DRC9 family. Component of the nexin-dynein regulatory complex (N-DRC). Interacts (via IQ domain) with calmodulin when calcium levels are low. Does not interact with calmodulin in the presence of Ca(2+). Interacts with hsp70 and may form a complex with camk4 and hsp70. Detected in adult testis, and at lower levels in brain, kidney and ovary.

Its subcellular location is the cytoplasm. The protein localises to the cell projection. It is found in the cilium. It localises to the flagellum. The protein resides in the cytoskeleton. Its subcellular location is the flagellum axoneme. Component of the nexin-dynein regulatory complex (N-DRC), a key regulator of ciliary/flagellar motility which maintains the alignment and integrity of the distal axoneme and regulates microtubule sliding in motile axonemes. Binds calmodulin when cellular Ca(2+) levels are low and thereby contributes to the regulation of calcium and calmodulin-dependent protein kinase IV (camk4) activity; contributes to the regulation of camk4 signaling cascades. Plays a role in the regulation of definitive hematopoiesis via its effects on camk4. This chain is Dynein regulatory complex protein 9, found in Danio rerio (Zebrafish).